Consider the following 589-residue polypeptide: (E)-beta-ocimene synthase, chloroplastic (589 aa).

The transit peptide at 1 to 25 (MAAHNLCFNSAFVCNVHHQKTQHFP) directs the protein to the chloroplast. The (2E,6E)-farnesyl diphosphate site is built by R302, D339, D343, R480, and N483. D339 and D343 together coordinate Mg(2+). Residues 339–343 (DDIYD) carry the DDXXD motif motif. Residues N483, T487, and E491 each coordinate Mg(2+).

The protein belongs to the terpene synthase family. Tpsb subfamily. Requires Mg(2+) as cofactor. It depends on Mn(2+) as a cofactor. In terms of tissue distribution, expressed exclusively in flowers.

It is found in the plastid. Its subcellular location is the chloroplast. It catalyses the reaction (2E,6E)-farnesyl diphosphate = (3E,6E)-alpha-farnesene + diphosphate. It functions in the pathway secondary metabolite biosynthesis; terpenoid biosynthesis. Functionally, predominantly involved in monoterpene (C10) biosynthesis. Using GPP as substrate, the major product is (E)-beta-ocimene with minor amounts of (Z)-beta-ocimene and myrcene. Using FPP as substrate, could also be able to synthesize in vitro sesquiterpenes (C15) with (E,E)-alpha-farnesene as the major product and with (Z,E)-alpha-farnesene and (E,E)-beta-farnesene as minor products. This chain is (E)-beta-ocimene synthase, chloroplastic (TPS02), found in Arabidopsis thaliana (Mouse-ear cress).